The following is a 293-amino-acid chain: Glutamyl-Q tRNA(Asp) synthetase (293 aa).

L-glutamate is bound by residues 8–12 and glutamate 44; that span reads RFAPT. A 'HIGH' region motif is present at residues 11–21; that stretch reads PTPSGYLHFGS. Zn(2+) is bound by residues cysteine 100, cysteine 102, tyrosine 114, and cysteine 118. L-glutamate is bound by residues tyrosine 171 and arginine 189. Residues 227 to 231 carry the 'KMSKS' region motif; the sequence is KLGKS. Lysine 230 serves as a coordination point for ATP.

This sequence belongs to the class-I aminoacyl-tRNA synthetase family. GluQ subfamily. Zn(2+) is required as a cofactor.

Functionally, catalyzes the tRNA-independent activation of glutamate in presence of ATP and the subsequent transfer of glutamate onto a tRNA(Asp). Glutamate is transferred on the 2-amino-5-(4,5-dihydroxy-2-cyclopenten-1-yl) moiety of the queuosine in the wobble position of the QUC anticodon. This is Glutamyl-Q tRNA(Asp) synthetase from Pseudomonas aeruginosa (strain LESB58).